A 531-amino-acid polypeptide reads, in one-letter code: RNA-binding protein RO60 (531 aa).

Residues V24–T360 form the TROVE domain. The segment at R128–N274 is RNA-binding. The interval F352 to V531 is VWFA-like domain. Positions 369, 371, and 438 each coordinate a divalent metal cation.

Belongs to the Ro 60 kDa family. As to quaternary structure, forms oligomers upon binding DrY RNA, The multimers are of an average size of 700 kDa and are composed of around 12 molecules of Rsr-DrY RNA.

It is found in the cytoplasm. In terms of biological role, binds to several small RNAs that accumulate during recovery from UV irradiation. Contributes to the resistance of D.radiodurans to ultraviolet irradiation. In Deinococcus radiodurans (strain ATCC 13939 / DSM 20539 / JCM 16871 / CCUG 27074 / LMG 4051 / NBRC 15346 / NCIMB 9279 / VKM B-1422 / R1), this protein is RNA-binding protein RO60.